A 457-amino-acid polypeptide reads, in one-letter code: UDP-N-acetylmuramoylalanine--D-glutamate ligase (457 aa).

Glycine 116–threonine 122 is a binding site for ATP.

Belongs to the MurCDEF family.

It localises to the cytoplasm. The enzyme catalyses UDP-N-acetyl-alpha-D-muramoyl-L-alanine + D-glutamate + ATP = UDP-N-acetyl-alpha-D-muramoyl-L-alanyl-D-glutamate + ADP + phosphate + H(+). It functions in the pathway cell wall biogenesis; peptidoglycan biosynthesis. Functionally, cell wall formation. Catalyzes the addition of glutamate to the nucleotide precursor UDP-N-acetylmuramoyl-L-alanine (UMA). The protein is UDP-N-acetylmuramoylalanine--D-glutamate ligase of Caldicellulosiruptor bescii (strain ATCC BAA-1888 / DSM 6725 / KCTC 15123 / Z-1320) (Anaerocellum thermophilum).